The following is a 262-amino-acid chain: Snake venom serine proteinase 1 (262 aa).

Positions 1 to 18 (MVLIRVLANLLILQLSYA) are cleaved as a signal peptide. A propeptide spanning residues 19-24 (QKSSEL) is cleaved from the precursor. The Peptidase S1 domain occupies 25-253 (VIGGDECNIN…HLDWIQSIIA (229 aa)). Cystine bridges form between Cys31–Cys165, Cys52–Cys68, Cys144–Cys214, Cys176–Cys193, and Cys204–Cys229. His67 (charge relay system) is an active-site residue. N-linked (GlcNAc...) asparagine glycosylation occurs at Asn105. Asp112 acts as the Charge relay system in catalysis. The Charge relay system role is filled by Ser208.

Belongs to the peptidase S1 family. Snake venom subfamily. In terms of assembly, monomer. Expressed by the venom gland.

Its subcellular location is the secreted. In terms of biological role, snake venom serine protease that may act in the hemostasis system of the prey. This is Snake venom serine proteinase 1 from Crotalus adamanteus (Eastern diamondback rattlesnake).